The primary structure comprises 249 residues: INO80 complex subunit 1 (249 aa).

C2H2-type zinc fingers lie at residues 73–100 (YTCE…LRSH) and 106–131 (FICS…RTVH).

In terms of assembly, component of the INO80 chromatin remodeling complex.

The protein localises to the nucleus. Its subcellular location is the cytoplasm. In terms of biological role, component of the INO80 complex which remodels chromatin by shifting nucleosomes and is involved in DNA repair. The polypeptide is INO80 complex subunit 1 (iec1) (Schizosaccharomyces pombe (strain 972 / ATCC 24843) (Fission yeast)).